Here is a 337-residue protein sequence, read N- to C-terminus: Palmitoyltransferase ZDHHC15 (337 aa).

Residues 1-20 lie on the Cytoplasmic side of the membrane; the sequence is MRRGWKMALSGGLRCCRRVL. Residues 21-41 traverse the membrane as a helical segment; it reads SWVPVLVIVLVVLWSYYAYVF. Over 42–56 the chain is Lumenal; it reads ELCLVTVLSPAEKVI. A helical membrane pass occupies residues 57 to 77; sequence YLILYHAIFVFFTWTYWKSIF. At 78 to 172 the chain is on the cytoplasmic side; it reads TLPQQPNQKF…NNCIGFSNYK (95 aa). One can recognise a DHHC domain in the interval 129-179; sequence RFCDRCHLIKPDRCHHCSVCAMCVLKMDHHCPWVNNCIGFSNYKFFLQFLA. Positions 131, 134, 144, 145, 148, 151, and 158 each coordinate Zn(2+). The S-palmitoyl cysteine intermediate role is filled by Cys159. Zn(2+) is bound at residue Cys165. A helical membrane pass occupies residues 173-193; that stretch reads FFLQFLAYSVLYCLYIATTVF. At 194–210 the chain is on the lumenal side; the sequence is SYFIKYWRGELPSVRSK. A helical membrane pass occupies residues 211 to 234; that stretch reads FHVLFLLFVACMFFVSLVILFGYH. The Cytoplasmic portion of the chain corresponds to 235–337; that stretch reads CWLVSRNKTT…SSSLAVETET (103 aa). Residues 306 to 337 form a disordered region; the sequence is PLLANEETWEDNEDDNQDYPEGSSSLAVETET. The segment covering 312–323 has biased composition (acidic residues); sequence ETWEDNEDDNQD. The segment covering 327-337 has biased composition (polar residues); it reads GSSSLAVETET.

It belongs to the DHHC palmitoyltransferase family. Post-translationally, autopalmitoylated (in vitro). In terms of tissue distribution, expressed in placenta, liver, lung, kidney, heart and brain.

The protein localises to the golgi apparatus membrane. It localises to the postsynaptic density. The enzyme catalyses L-cysteinyl-[protein] + hexadecanoyl-CoA = S-hexadecanoyl-L-cysteinyl-[protein] + CoA. It carries out the reaction L-cysteinyl-[protein] + tetradecanoyl-CoA = S-tetradecanoyl-L-cysteinyl-[protein] + CoA. It catalyses the reaction L-cysteinyl-[protein] + octadecanoyl-CoA = S-octadecanoyl-L-cysteinyl-[protein] + CoA. Functionally, palmitoyltransferase that catalyzes the addition of palmitate onto various protein substrates. Has no stringent fatty acid selectivity and in addition to palmitate can also transfer onto target proteins myristate from tetradecanoyl-CoA and stearate from octadecanoyl-CoA. Palmitoylates IGF2R and SORT1, promoting their partitioning to an endosomal membrane subdomain where they can interact with the retromer cargo-selective complex. Thereby, regulates retrograde transport from endosomes to the Golgi apparatus of these lysosomal sorting receptors and plays a role in trafficking of lysosomal proteins. In the nervous system, catalyzes the palmitoylation of DLG4/PSD95 and regulates its synaptic clustering and function in synaptogenesis. Could be involved in the differentiation of dopaminergic neurons and the development of the diencephalon. Could also catalyze the palmitoylation of GAP43. Could also palmitoylate DNAJC5 and regulate its localization to the Golgi membrane. Could also palmitoylate FYN as shown in vitro. May palmitoylate CALHM3 subunit of gustatory voltage-gated ion channels and modulate channel gating and kinetics. This Homo sapiens (Human) protein is Palmitoyltransferase ZDHHC15.